The chain runs to 299 residues: Protoheme IX farnesyltransferase (299 aa).

9 helical membrane-spanning segments follow: residues valine 25–valine 45, tryptophan 47–valine 67, alanine 95–phenylalanine 115, leucine 119–leucine 139, isoleucine 147–glycine 167, proline 173–isoleucine 193, valine 218–histidine 238, leucine 243–tyrosine 263, and phenylalanine 277–leucine 297.

The protein belongs to the UbiA prenyltransferase family. Protoheme IX farnesyltransferase subfamily.

The protein localises to the cell inner membrane. It catalyses the reaction heme b + (2E,6E)-farnesyl diphosphate + H2O = Fe(II)-heme o + diphosphate. It participates in porphyrin-containing compound metabolism; heme O biosynthesis; heme O from protoheme: step 1/1. Its function is as follows. Converts heme B (protoheme IX) to heme O by substitution of the vinyl group on carbon 2 of heme B porphyrin ring with a hydroxyethyl farnesyl side group. The polypeptide is Protoheme IX farnesyltransferase (Stutzerimonas stutzeri (strain A1501) (Pseudomonas stutzeri)).